Consider the following 384-residue polypeptide: MNTPATLPLGGEDTTWTPGINASWAPDEEEDAVRSDGTGTAGMVTIQCIYALVCLVGLVGNALVIFVILRYAKMKTATNIYLLNLAVADELFMLSVPFVASAAALRHWPFGAVLCRAVLSVDGLNMFTSVFCLTVLSVDRYVAVVHPLRAATYRRPSVAKLINLGVWLASLLVTLPIAVFADTRPARGGEAVACNLHWPHPAWSAVFVIYTFLLGFLLPVLAIGLCYLLIVGKMRAVALRAGWQQRRRSEKKITRLVLMVVTVFVLCWMPFYVVQLLNLFVTSLDATVNHVSLILSYANSCANPILYGFLSDNFRRSFQRVLCLRCCLLETTGGAEEEPLDYYATALKSRGGPGCICPPLPCQQEPMQAEPACKRVPFTKTTTF.

A disordered region spans residues 1–34; sequence MNTPATLPLGGEDTTWTPGINASWAPDEEEDAVR. Over 1 to 41 the chain is Extracellular; sequence MNTPATLPLGGEDTTWTPGINASWAPDEEEDAVRSDGTGTA. Residue asparagine 21 is glycosylated (N-linked (GlcNAc...) asparagine). The chain crosses the membrane as a helical span at residues 42-69; the sequence is GMVTIQCIYALVCLVGLVGNALVIFVIL. At 70–79 the chain is on the cytoplasmic side; that stretch reads RYAKMKTATN. The chain crosses the membrane as a helical span at residues 80–105; the sequence is IYLLNLAVADELFMLSVPFVASAAAL. Topologically, residues 106-116 are extracellular; that stretch reads RHWPFGAVLCR. Residues cysteine 115 and cysteine 194 are joined by a disulfide bond. A helical transmembrane segment spans residues 117 to 138; the sequence is AVLSVDGLNMFTSVFCLTVLSV. At 139–160 the chain is on the cytoplasmic side; that stretch reads DRYVAVVHPLRAATYRRPSVAK. Residues 161–181 traverse the membrane as a helical segment; that stretch reads LINLGVWLASLLVTLPIAVFA. Topologically, residues 182-203 are extracellular; sequence DTRPARGGEAVACNLHWPHPAW. Residues 204-228 traverse the membrane as a helical segment; sequence SAVFVIYTFLLGFLLPVLAIGLCYL. Residues 229–254 are Cytoplasmic-facing; sequence LIVGKMRAVALRAGWQQRRRSEKKIT. Residues 255–280 traverse the membrane as a helical segment; that stretch reads RLVLMVVTVFVLCWMPFYVVQLLNLF. At 281–287 the chain is on the extracellular side; it reads VTSLDAT. Residues 288–311 traverse the membrane as a helical segment; sequence VNHVSLILSYANSCANPILYGFLS. Topologically, residues 312-384 are cytoplasmic; it reads DNFRRSFQRV…RVPFTKTTTF (73 aa). The S-palmitoyl cysteine moiety is linked to residue cysteine 323.

It belongs to the G-protein coupled receptor 1 family. As to expression, brain, lung, heart and islets. Moderate levels in the hippocampus, cortex and olfactory bulb.

The protein resides in the cell membrane. Its function is as follows. Receptor for somatostatin-14. The activity of this receptor is mediated by G proteins which inhibits adenylyl cyclase. It is functionally coupled not only to inhibition of adenylate cyclase, but also to activation of both arachidonate release and mitogen-activated protein (MAP) kinase cascade. The sequence is that of Somatostatin receptor type 4 (Sstr4) from Rattus norvegicus (Rat).